The following is a 192-amino-acid chain: uncharacterized protein (192 aa).

Residues 29 to 160 form the Nudix hydrolase domain; sequence QRQAAVLIPV…PLDVYRRGNS (132 aa). A Nudix box motif is present at residues 67-89; the sequence is GAVDSTDASLIAAALREAQEEVA. Mg(2+) contacts are provided by E83 and E87.

Belongs to the Nudix hydrolase family. PCD1 subfamily. Mn(2+) is required as a cofactor. It depends on Mg(2+) as a cofactor.

In terms of biological role, probably mediates the hydrolysis of some nucleoside diphosphate derivatives. This is an uncharacterized protein from Salmonella choleraesuis (strain SC-B67).